Consider the following 72-residue polypeptide: MAKDDVIEVEGKVVDTMPNAMFTVELENGHQILATVSGKIRKNYIRILAGDRVTVEMSPYDLTRGRITYRFK.

The S1-like domain occupies 1 to 72 (MAKDDVIEVE…TRGRITYRFK (72 aa)).

The protein belongs to the IF-1 family. Component of the 30S ribosomal translation pre-initiation complex which assembles on the 30S ribosome in the order IF-2 and IF-3, IF-1 and N-formylmethionyl-tRNA(fMet); mRNA recruitment can occur at any time during PIC assembly.

The protein localises to the cytoplasm. Its function is as follows. One of the essential components for the initiation of protein synthesis. Stabilizes the binding of IF-2 and IF-3 on the 30S subunit to which N-formylmethionyl-tRNA(fMet) subsequently binds. Helps modulate mRNA selection, yielding the 30S pre-initiation complex (PIC). Upon addition of the 50S ribosomal subunit IF-1, IF-2 and IF-3 are released leaving the mature 70S translation initiation complex. The protein is Translation initiation factor IF-1 of Streptococcus pneumoniae serotype 2 (strain D39 / NCTC 7466).